The chain runs to 312 residues: Tetraacyldisaccharide 4'-kinase (312 aa).

Position 60–67 (60–67) interacts with ATP; it reads IAGGSGKT.

The protein belongs to the LpxK family.

The enzyme catalyses a lipid A disaccharide + ATP = a lipid IVA + ADP + H(+). Its pathway is glycolipid biosynthesis; lipid IV(A) biosynthesis; lipid IV(A) from (3R)-3-hydroxytetradecanoyl-[acyl-carrier-protein] and UDP-N-acetyl-alpha-D-glucosamine: step 6/6. Transfers the gamma-phosphate of ATP to the 4'-position of a tetraacyldisaccharide 1-phosphate intermediate (termed DS-1-P) to form tetraacyldisaccharide 1,4'-bis-phosphate (lipid IVA). In Helicobacter pylori (strain ATCC 700392 / 26695) (Campylobacter pylori), this protein is Tetraacyldisaccharide 4'-kinase.